We begin with the raw amino-acid sequence, 47 residues long: PhoP/PhoQ regulator MgrB (47 aa).

Residues 6–26 (WAILLAVLVACLLLWMQTLNV) traverse the membrane as a helical segment.

Belongs to the MgrB family. As to quaternary structure, may form homooligomers. Probably interacts with the periplasmic domain of PhoQ.

The protein resides in the cell inner membrane. Functionally, phoP-regulated transcription is redox-sensitive, being activated when the periplasm becomes more reducing. MgrB acts between DsbA/DsbB and PhoP/PhoQ in this pathway. Represses PhoP/PhoQ signaling, possibly by binding to the periplasmic domain of PhoQ, altering its activity and that of downstream effector PhoP. The protein is PhoP/PhoQ regulator MgrB of Cronobacter sakazakii (strain ATCC BAA-894) (Enterobacter sakazakii).